The chain runs to 1129 residues: MARYTQRPENALKRANEFIEVGKPLRALDTLQEVFRNKRWNYAYSETVIEPLMFKYLYLCVELKKSHIAKEGLFQYRNMFQLVNVNSLENVIRGYLKMAEEHTEAAQAQSSAAVAVLELDDLDNIATPESILMSAVCGEDAQDRSDRTILLPWVKFLWESYCQCLELLRVNTHCEALYHDIARMAFQFCLKYNRKSEFRRLCDKLRKHLEDICKSSNQTTGVSINKVETQQLCLDTRLYLLDSAIQMELWQEAYKAIEDIHGLMAMSKKTPVPKTMANYYQKLAMVFSKAGNQLFHAAALLKLFQLTRELKKNLTKDDLQRMAAHVLLATLSIPLPSAHPEFDRFIEADKSPLEKAQKLAVLLGLPQPPTRVSLIREVVRLNVPNLVSEDFRNLYNWLEVDFNPLNLCKRIQSIVDTIEASETENTLLTPYIQSLKDVTIMRLIRQISQVYESIEFKRLLELAPFCNIFELEKLLVESVRHNDMQIRIDHQRNSIYFGTDLTESQREYRPDGPTLQSMPSEQIRSQLVNMSTVLTRAVSIVYPNRERDQRAKLRSQMVQHYHEIKDREHQRILQRQKIIEDRKEFIEKQNNAREEEEARRHEEESRKAKLAEQKRLEQEQEERERKRHENEIQAIKEKSLKEKVQQISQTAHGKKMLSKLDEEGIKKLDAEQIAMRESEELQRERKELQSKLKSQEKKIDYFERAKRLEEIPLFEKYLAEKNVKDKEFWEATEATRIENAIAERKDAVSQQERLKRMYPDRDEFLEALKKERASLFVEKLKKFEIALAEERKKRLAERVVRRREERRQAYLRAKEEERFRKEEEIRLAREAEERAAAEARRLEREAEDEKRRQQYEKQRAKEEEAERKIQEDRERLAREVAVERERSEKERDVWRPRGDRSERPSAAPAGGASEWRRNAPTSDRNDRNDRNERNDRSDRNDRNDRSERIERSDRNDRPERKDTDGGADSSWRVRREPVEPQRERGGGAGGGPSGRDDKWRRGGDRSERLGGDRDRDRDRDSFRRNDGPRRDDDRGGFRRDDQPQRDTGSNWRDSPRQNDRDNRDNRRPAGDRRDIRGAGPKEGGGGGGGGNWRTAPSPRDEKPPVKRDQPQDKENKAGDDGEWTSVKRR.

Residues 319-502 form the PCI domain; sequence LQRMAAHVLL…NSIYFGTDLT (184 aa). 2 disordered regions span residues 590–633 and 836–1129; these read NNAR…NEIQ and AAEA…VKRR. Composition is skewed to basic and acidic residues over residues 836-903, 923-964, 971-985, 994-1044, and 1053-1076; these read AAEA…RSER, DRND…KDTD, WRVRREPVEPQRERG, GRDD…DQPQ, and DSPRQNDRDNRDNRRPAGDRRDIR. A compositionally biased stretch (gly residues) spans 1080–1091; it reads PKEGGGGGGGGN. Residues 1098–1119 are compositionally biased toward basic and acidic residues; that stretch reads PRDEKPPVKRDQPQDKENKAGD.

This sequence belongs to the eIF-3 subunit A family. Component of the eukaryotic translation initiation factor 3 (eIF-3) complex. The eIF-3 complex interacts with pix.

Its subcellular location is the cytoplasm. Its function is as follows. RNA-binding component of the eukaryotic translation initiation factor 3 (eIF-3) complex, which is involved in protein synthesis of a specialized repertoire of mRNAs and, together with other initiation factors, stimulates binding of mRNA and methionyl-tRNAi to the 40S ribosome. The eIF-3 complex specifically targets and initiates translation of a subset of mRNAs involved in cell proliferation. The protein is Eukaryotic translation initiation factor 3 subunit A of Drosophila mojavensis (Fruit fly).